The following is a 549-amino-acid chain: T-complex protein 1 subunit theta (549 aa).

This sequence belongs to the TCP-1 chaperonin family. In terms of assembly, heterooligomeric complex of about 850 to 900 kDa that forms two stacked rings, 12 to 16 nm in diameter. Interacts with CCT3, KNAT1, STM and TTG1. In terms of tissue distribution, expressed in shoot meristems, root tip, vasculature and leaf epidermis.

It is found in the cytoplasm. In terms of biological role, molecular chaperone; assists the folding of proteins upon ATP hydrolysis. Known to play a role, in vitro, in the folding of actin and tubulin. Contributes to stem cell maintenance through its impact on transcription factors trafficking through plasmodesmata. Probably involved in refolding translocated, partially unfolded proteins, including viral movement proteins. The polypeptide is T-complex protein 1 subunit theta (Arabidopsis thaliana (Mouse-ear cress)).